The following is a 431-amino-acid chain: Serine hydroxymethyltransferase (431 aa).

Residue 121–123 coordinates (6S)-5,6,7,8-tetrahydrofolate; it reads AHV. The residue at position 227 (lysine 227) is an N6-(pyridoxal phosphate)lysine.

It belongs to the SHMT family. Homodimer. Requires pyridoxal 5'-phosphate as cofactor.

The protein localises to the cytoplasm. It functions in the pathway amino-acid biosynthesis; glycine biosynthesis; glycine from L-serine: step 1/1. Catalyzes the reversible interconversion of serine and glycine with a modified folate serving as the one-carbon carrier. Also exhibits a pteridine-independent aldolase activity toward beta-hydroxyamino acids, producing glycine and aldehydes, via a retro-aldol mechanism. The chain is Serine hydroxymethyltransferase from Metallosphaera sedula (strain ATCC 51363 / DSM 5348 / JCM 9185 / NBRC 15509 / TH2).